We begin with the raw amino-acid sequence, 221 residues long: Large ribosomal subunit protein uL3 (221 aa).

The protein belongs to the universal ribosomal protein uL3 family. Part of the 50S ribosomal subunit. Forms a cluster with proteins L14 and L19.

One of the primary rRNA binding proteins, it binds directly near the 3'-end of the 23S rRNA, where it nucleates assembly of the 50S subunit. This Chlamydia trachomatis serovar L2 (strain ATCC VR-902B / DSM 19102 / 434/Bu) protein is Large ribosomal subunit protein uL3.